The primary structure comprises 104 residues: Large ribosomal subunit protein uL23 (104 aa).

Belongs to the universal ribosomal protein uL23 family. As to quaternary structure, part of the 50S ribosomal subunit. Contacts protein L29, and trigger factor when it is bound to the ribosome.

Its function is as follows. One of the early assembly proteins it binds 23S rRNA. One of the proteins that surrounds the polypeptide exit tunnel on the outside of the ribosome. Forms the main docking site for trigger factor binding to the ribosome. This chain is Large ribosomal subunit protein uL23, found in Paraburkholderia phymatum (strain DSM 17167 / CIP 108236 / LMG 21445 / STM815) (Burkholderia phymatum).